We begin with the raw amino-acid sequence, 237 residues long: H/ACA ribonucleoprotein complex subunit 1 (237 aa).

Gly residues-rich tracts occupy residues 1-59 (MGFG…GGRG) and 172-237 (RGGG…RGRW). Disordered regions lie at residues 1-64 (MGFG…FDTG) and 157-237 (KPPQ…RGRW). RGG-box stretches follow at residues 4–56 (GKPR…GRGG) and 166–236 (KAFT…GRGR).

It belongs to the GAR1 family. In terms of assembly, component of the box H/ACA small nucleolar ribonucleoprotein (H/ACA snoRNP) complex consisting of Nop60B, Gar1, NPH2 and Nop10, and associated with H/ACA-type snoRNAs.

The protein localises to the nucleus. It is found in the nucleolus. Its function is as follows. Component of the box H/ACA small nucleolar ribonucleoprotein (H/ACA snoRNP) complex, which catalyzes pseudouridylation of rRNA. This involves the isomerization of uridine such that the ribose is subsequently attached to C5, instead of the normal N1. Pseudouridine ('psi') residues may serve to stabilize the conformation of rRNAs. Required for ribosome biogenesis. H/ACA snoRNP complex-dependent ribosome biogenesis is important in female germline cell differentiation during oogenesis. This is H/ACA ribonucleoprotein complex subunit 1 from Drosophila melanogaster (Fruit fly).